We begin with the raw amino-acid sequence, 250 residues long: mRNA-decapping protein g5R (250 aa).

A Nudix hydrolase domain is found at glutamine 97–phenylalanine 239. A Nudix box motif is present at residues glycine 132–glycine 153. Position 138 (glutamate 138) interacts with Mg(2+). Glutamate 147 serves as the catalytic Nucleophile. Mg(2+) contacts are provided by glutamate 151 and aspartate 173.

The protein belongs to the Nudix hydrolase family. DIPP subfamily. Interacts with host RPL23A. Requires Mg(2+) as cofactor. Mn(2+) is required as a cofactor.

It localises to the host rough endoplasmic reticulum. It carries out the reaction diphospho-myo-inositol polyphosphate + H2O = myo-inositol polyphosphate + phosphate.. Its function is as follows. Decapping enzyme required for the removal of the 5'-end m7GpppN cap tethered to viral and host mRNAs to allow their decay in cells. May therefore accelerate viral and cellular mRNA turnover to eliminate competing host mRNAs and allow stage-specific synthesis of viral proteins. Acceleration of the turnover of cellular transcripts may even promote the shutoff of host protein synthesis. In addition to the mRNA cap, g5R also efficiently hydrolyzes diphosphoinositol polyphosphates. Down-regulation of the level of PP-InsP5 (diphosphoinositol pentakisphosphate) may play a role in viral manipulation of the cellular secretory pathway, a step necessary for the formation of virions. Binds viral and cellular poly(A) mRNAs, thereby decreasing both types of mRNAs. This chain is mRNA-decapping protein g5R, found in Ornithodoros (relapsing fever ticks).